The sequence spans 211 residues: Large ribosomal subunit protein uL3 (211 aa).

N5-methylglutamine is present on Gln150.

This sequence belongs to the universal ribosomal protein uL3 family. In terms of assembly, part of the 50S ribosomal subunit. Forms a cluster with proteins L14 and L19. Post-translationally, methylated by PrmB.

Its function is as follows. One of the primary rRNA binding proteins, it binds directly near the 3'-end of the 23S rRNA, where it nucleates assembly of the 50S subunit. The protein is Large ribosomal subunit protein uL3 of Pseudomonas putida (strain GB-1).